The primary structure comprises 335 residues: Anthranilate phosphoribosyltransferase (335 aa).

5-phospho-alpha-D-ribose 1-diphosphate-binding positions include glycine 79, 82 to 83 (GD), serine 87, 89 to 92 (NIST), 107 to 115 (KHGNRSITS), and serine 119. Glycine 79 is an anthranilate binding site. Serine 91 contacts Mg(2+). Asparagine 110 is a binding site for anthranilate. Residue arginine 165 coordinates anthranilate. Mg(2+) contacts are provided by aspartate 224 and glutamate 225.

Belongs to the anthranilate phosphoribosyltransferase family. As to quaternary structure, homodimer. It depends on Mg(2+) as a cofactor.

The enzyme catalyses N-(5-phospho-beta-D-ribosyl)anthranilate + diphosphate = 5-phospho-alpha-D-ribose 1-diphosphate + anthranilate. Its pathway is amino-acid biosynthesis; L-tryptophan biosynthesis; L-tryptophan from chorismate: step 2/5. Catalyzes the transfer of the phosphoribosyl group of 5-phosphorylribose-1-pyrophosphate (PRPP) to anthranilate to yield N-(5'-phosphoribosyl)-anthranilate (PRA). This Lactococcus lactis subsp. cremoris (strain SK11) protein is Anthranilate phosphoribosyltransferase.